A 605-amino-acid chain; its full sequence is Adenine deaminase (605 aa).

Belongs to the metallo-dependent hydrolases superfamily. Adenine deaminase family. Mn(2+) is required as a cofactor.

It carries out the reaction adenine + H2O + H(+) = hypoxanthine + NH4(+). This is Adenine deaminase from Staphylothermus marinus (strain ATCC 43588 / DSM 3639 / JCM 9404 / F1).